The sequence spans 158 residues: Succinate dehydrogenase assembly factor 2, mitochondrial (158 aa).

The N-terminal 23 residues, 1–23 (MLRQLLATARRLLLPLATPKRCL), are a transit peptide targeting the mitochondrion.

Belongs to the SDHAF2 family. As to quaternary structure, interacts with the flavoprotein subunit within the SDH catalytic dimer.

The protein resides in the mitochondrion matrix. In terms of biological role, plays an essential role in the assembly of succinate dehydrogenase (SDH), an enzyme complex (also referred to as respiratory complex II) that is a component of both the tricarboxylic acid (TCA) cycle and the mitochondrial electron transport chain, and which couples the oxidation of succinate to fumarate with the reduction of ubiquinone (coenzyme Q) to ubiquinol. Required for flavinylation (covalent attachment of FAD) of the flavoprotein subunit of the SDH catalytic dimer. The sequence is that of Succinate dehydrogenase assembly factor 2, mitochondrial from Drosophila virilis (Fruit fly).